The primary structure comprises 172 residues: Adenine phosphoribosyltransferase (172 aa).

This sequence belongs to the purine/pyrimidine phosphoribosyltransferase family. In terms of assembly, homodimer.

It is found in the cytoplasm. It carries out the reaction AMP + diphosphate = 5-phospho-alpha-D-ribose 1-diphosphate + adenine. It participates in purine metabolism; AMP biosynthesis via salvage pathway; AMP from adenine: step 1/1. Its function is as follows. Catalyzes a salvage reaction resulting in the formation of AMP, that is energically less costly than de novo synthesis. The polypeptide is Adenine phosphoribosyltransferase (Methanococcus maripaludis (strain C7 / ATCC BAA-1331)).